A 514-amino-acid polypeptide reads, in one-letter code: LWamide neuropeptides (514 aa).

A signal peptide spans 1-22 (MALKCHLVLLAITLLLAQCSGS). Positions 23-53 (VDKKDSTTNHLDEKKTDSTEAHIVQETDALK) are enriched in basic and acidic residues. Residues 23-75 (VDKKDSTTNHLDEKKTDSTEAHIVQETDALKENSYLGAEEESKEEDKKRSAAP) constitute a propeptide that is removed on maturation. The interval 23 to 180 (VDKKDSTTNH…PGLWGRSADA (158 aa)) is disordered. 2 positions are modified to tryptophan amide: Trp81 and Trp90. Residues 93 to 97 (SADAG) constitute a propeptide that is removed on maturation. Trp102 and Trp111 each carry tryptophan amide. Residues 114-118 (SADAG) constitute a propeptide that is removed on maturation. A tryptophan amide mark is found at Trp123 and Trp132. Residues 135–139 (SADAG) constitute a propeptide that is removed on maturation. A tryptophan amide mark is found at Trp144 and Trp153. Positions 156 to 160 (SADAG) are excised as a propeptide. Trp165 and Trp174 each carry tryptophan amide. Positions 177–181 (SADAR) are excised as a propeptide. Trp186 bears the Tryptophan amide mark. Residues 190-199 (EIYALWGGKR) constitute a propeptide that is removed on maturation. Position 205 is a tryptophan amide (Trp205). Residues 208–212 (SADPG) constitute a propeptide that is removed on maturation. Trp217 carries the tryptophan amide modification. A propeptide spanning residues 221–230 (ELVGLWGGKR) is cleaved from the precursor. Tryptophan amide is present on Trp236. Positions 239–243 (SAEAG) are excised as a propeptide. A tryptophan amide mark is found at Trp248 and Trp257. Residues 258–475 (GRSADPLQPG…GRSAGSGQLG (218 aa)) are disordered. Positions 260–264 (SADPL) are excised as a propeptide. Tryptophan amide occurs at positions 269 and 278. Positions 281–284 (SADP) are excised as a propeptide. Residues Trp290 and Trp299 each carry the tryptophan amide modification. Residues 302 to 305 (SADP) constitute a propeptide that is removed on maturation. Tryptophan amide occurs at positions 311 and 320. Positions 323–326 (SADP) are excised as a propeptide. Tryptophan amide is present on residues Trp332 and Trp341. A propeptide spanning residues 344 to 347 (SADP) is cleaved from the precursor. Trp353 carries the post-translational modification Tryptophan amide. A propeptide spanning residues 356 to 366 (SPGLWGRSADP) is cleaved from the precursor. Trp372 bears the Tryptophan amide mark. The propeptide occupies 376-387 (QNPGFWGRSADP). Residues Trp393 and Trp402 each carry the tryptophan amide modification. Positions 405-408 (SADP) are excised as a propeptide. Residues Trp414 and Trp423 each carry the tryptophan amide modification. The propeptide occupies 426 to 429 (SADP). 2 positions are modified to tryptophan amide: Trp435 and Trp444. Positions 447 to 450 (SADP) are excised as a propeptide. Residues Trp456 and Trp465 each carry the tryptophan amide modification. Residues 468 to 472 (SAGSG) constitute a propeptide that is removed on maturation. Trp477 and Trp487 each carry tryptophan amide. The disordered stretch occupies residues 489-514 (RSAEPPQFEDLEDLKKKSAIPQPKGQ). The propeptide occupies 490–514 (SAEPPQFEDLEDLKKKSAIPQPKGQ).

It belongs to the LWamide neuropeptide family.

The protein localises to the secreted. In terms of biological role, metamorphosin A may be part of an internal signaling system involved in control of metamorphosis. In Anthopleura elegantissima (Green aggregating anemone), this protein is LWamide neuropeptides.